The sequence spans 178 residues: MIDDNIENNEQTINDIAEEIVEKANPEITELKAEIEELKDRLIRTTAEIDNTRKRLEKARDEAKDYAIATFAKELLNVSDNLSRALAHKPANSDIEVTNIIAGVQMTKDELDKIFHRHHIEEIKPEIGSMFDYNLHNAISQIEHPDHEPNSIITLMQSGYKIRDRLLRPATVQVAKKS.

Belongs to the GrpE family. As to quaternary structure, homodimer.

It is found in the cytoplasm. Its function is as follows. Participates actively in the response to hyperosmotic and heat shock by preventing the aggregation of stress-denatured proteins, in association with DnaK and GrpE. It is the nucleotide exchange factor for DnaK and may function as a thermosensor. Unfolded proteins bind initially to DnaJ; upon interaction with the DnaJ-bound protein, DnaK hydrolyzes its bound ATP, resulting in the formation of a stable complex. GrpE releases ADP from DnaK; ATP binding to DnaK triggers the release of the substrate protein, thus completing the reaction cycle. Several rounds of ATP-dependent interactions between DnaJ, DnaK and GrpE are required for fully efficient folding. This chain is Protein GrpE, found in Rickettsia akari (strain Hartford).